Consider the following 323-residue polypeptide: tRNA-modifying protein YgfZ (323 aa).

Positions 29 and 182 each coordinate folate.

The protein belongs to the tRNA-modifying YgfZ family.

It is found in the cytoplasm. Folate-binding protein involved in regulating the level of ATP-DnaA and in the modification of some tRNAs. It is probably a key factor in regulatory networks that act via tRNA modification, such as initiation of chromosomal replication. This chain is tRNA-modifying protein YgfZ, found in Vibrio cholerae serotype O1 (strain ATCC 39541 / Classical Ogawa 395 / O395).